A 414-amino-acid chain; its full sequence is Serine/threonine transporter SstT (414 aa).

Residues 2 to 15 (TTQRSPGLFRRLAH) lie on the Cytoplasmic side of the membrane. Residues 16 to 36 (GSLVKQILVGLVLGILLAWIS) form a helical membrane-spanning segment. Over 37 to 45 (KPAAEAVGL) the chain is Periplasmic. The chain crosses the membrane as a helical span at residues 46–66 (LGTLFVGALKAVAPILVLMLV). Residues 67–83 (MASIANHQHGQKTNIRP) lie on the Cytoplasmic side of the membrane. Residues 84–104 (ILFLYLLGTFSAALAAVVFSF) form a helical membrane-spanning segment. The Periplasmic portion of the chain corresponds to 105–142 (AFPSTLHLSSSAGDISPPSGIVEVMRGLVMSMVSNPID). A helical membrane pass occupies residues 143–163 (ALLKGNYIGILVWAIGLGFAL). Residues 164-179 (RHGNETTKNLVNDLSN) are Cytoplasmic-facing. Residues 180–200 (AVTFMVKLVIRFAPIGIFGLV) form a helical membrane-spanning segment. The Periplasmic segment spans residues 201–217 (SSTLATTGFSTLWGYAQ). Residues 218 to 238 (LLVVLVGCMLLVALVVNPLLV) form a helical membrane-spanning segment. Residues 239–299 (WWKIRRNPFP…VSIPLGATIN (61 aa)) lie on the Cytoplasmic side of the membrane. The helical transmembrane segment at 300-320 (MAGAAITITVLTLAAVNTLGI) threads the bilayer. Residues 321–331 (PVDLPTALLLS) are Periplasmic-facing. Residues 332–352 (VVASLCACGASGVAGGSLLLI) form a helical membrane-spanning segment. Topologically, residues 353–414 (PLACNMFGIS…DRLANSALRN (62 aa)) are cytoplasmic.

This sequence belongs to the dicarboxylate/amino acid:cation symporter (DAACS) (TC 2.A.23) family.

It is found in the cell inner membrane. It carries out the reaction L-serine(in) + Na(+)(in) = L-serine(out) + Na(+)(out). The catalysed reaction is L-threonine(in) + Na(+)(in) = L-threonine(out) + Na(+)(out). Involved in the import of serine and threonine into the cell, with the concomitant import of sodium (symport system). The polypeptide is Serine/threonine transporter SstT (Shigella boydii serotype 4 (strain Sb227)).